The primary structure comprises 482 residues: tRNA sulfurtransferase (482 aa).

Residues 61 to 165 (LAIRDALTRI…DDRLLLIKGR (105 aa)) form the THUMP domain. ATP is bound by residues 183 to 184 (LI), lysine 265, glycine 287, and glutamine 296. Residues cysteine 344 and cysteine 456 are joined by a disulfide bond. In terms of domain architecture, Rhodanese spans 404–482 (FGANDVILDI…GFANVKVYRP (79 aa)). Residue cysteine 456 is the Cysteine persulfide intermediate of the active site.

The protein belongs to the ThiI family.

It localises to the cytoplasm. The enzyme catalyses [ThiI sulfur-carrier protein]-S-sulfanyl-L-cysteine + a uridine in tRNA + 2 reduced [2Fe-2S]-[ferredoxin] + ATP + H(+) = [ThiI sulfur-carrier protein]-L-cysteine + a 4-thiouridine in tRNA + 2 oxidized [2Fe-2S]-[ferredoxin] + AMP + diphosphate. It catalyses the reaction [ThiS sulfur-carrier protein]-C-terminal Gly-Gly-AMP + S-sulfanyl-L-cysteinyl-[cysteine desulfurase] + AH2 = [ThiS sulfur-carrier protein]-C-terminal-Gly-aminoethanethioate + L-cysteinyl-[cysteine desulfurase] + A + AMP + 2 H(+). Its pathway is cofactor biosynthesis; thiamine diphosphate biosynthesis. Its function is as follows. Catalyzes the ATP-dependent transfer of a sulfur to tRNA to produce 4-thiouridine in position 8 of tRNAs, which functions as a near-UV photosensor. Also catalyzes the transfer of sulfur to the sulfur carrier protein ThiS, forming ThiS-thiocarboxylate. This is a step in the synthesis of thiazole, in the thiamine biosynthesis pathway. The sulfur is donated as persulfide by IscS. The chain is tRNA sulfurtransferase from Salmonella agona (strain SL483).